A 298-amino-acid chain; its full sequence is MIKQSTLKKSINIKGFGLHSGKPVKLTLNPAPVNSGIIYRRIDISPPVEFISNVNLIKNTNLCTSLENKNGVNISTVEHLSAAICGLGIDNIIIEITSSEIPIMDGSSWPFVDIIINSSGIKTLEHDKKFIYIKKIVRVEKEDKWIEVTPSNKFTLDFSIDFDHPVISSTSQNFFFTFSVNSFINQISKARTFGFLRDIKYLQSNKLALGGNCNCAIVIGNKRILNKEGLRFSNEFIRHKILDAIGDFFVSGYNIVGAFKAFKPGHNMHYMLLKKIFRNKNTWEFSTMKNNHSYVNNF.

Residues His79, His239, and Asp243 each coordinate Zn(2+). His266 acts as the Proton donor in catalysis.

The protein belongs to the LpxC family. It depends on Zn(2+) as a cofactor.

The catalysed reaction is a UDP-3-O-[(3R)-3-hydroxyacyl]-N-acetyl-alpha-D-glucosamine + H2O = a UDP-3-O-[(3R)-3-hydroxyacyl]-alpha-D-glucosamine + acetate. The protein operates within glycolipid biosynthesis; lipid IV(A) biosynthesis; lipid IV(A) from (3R)-3-hydroxytetradecanoyl-[acyl-carrier-protein] and UDP-N-acetyl-alpha-D-glucosamine: step 2/6. Its function is as follows. Catalyzes the hydrolysis of UDP-3-O-myristoyl-N-acetylglucosamine to form UDP-3-O-myristoylglucosamine and acetate, the committed step in lipid A biosynthesis. In Wigglesworthia glossinidia brevipalpis, this protein is UDP-3-O-acyl-N-acetylglucosamine deacetylase.